Here is a 329-residue protein sequence, read N- to C-terminus: MSNNAAYLAPQVKTTSTSSKTTFHFAAGLCSGLTSSILLQPADLLKTRVQQSQQTAALLPTLKTILSSPHPIRSLWRGTLPSALRTGFGSALYFTTLNALRQPLAQSAVLTGSNGSANKGTKSSSALPKLSNWANLGTGAVARVAAGFVMMPVTVIKVRYESDYYAYRSLYGAGRDIVRTEGFRGLFSGFGATAARDAPYAGLYVLFYEQLKRHLAGLKHSGTADQPLAATSSSSINFISGGLAAGLATTITNPFDAVKTRLQLMPGKYGNMMRAVKLMIQEDGVRSLFGGLGLRITRKALSSALAWTVYEELILRAEIRWAEKAHAHV.

3 Solcar repeats span residues 19–103 (SKTT…LRQP), 130–214 (LSNW…LKRH), and 232–316 (SSSS…LILR). Transmembrane regions (helical) follow at residues 25 to 50 (FAAG…TRVQ), 78 to 104 (GTLP…RQPL), 136 to 161 (LGTG…VRYE), 189 to 212 (GFGA…EQLK), 236 to 262 (INFI…KTRL), and 291 to 309 (GLGL…AWTV).

The protein belongs to the mitochondrial carrier (TC 2.A.29) family. SLC25A38 subfamily.

It is found in the mitochondrion inner membrane. The catalysed reaction is glycine(in) = glycine(out). In terms of biological role, mitochondrial glycine transporter that imports glycine into the mitochondrial matrix. Plays an important role in providing glycine for the first enzymatic step in heme biosynthesis, the condensation of glycine with succinyl-CoA to produce 5-aminolevulinate (ALA) in the mitochondrial matrix. This chain is Mitochondrial glycine transporter, found in Aspergillus terreus (strain NIH 2624 / FGSC A1156).